Consider the following 249-residue polypeptide: Indole-3-glycerol phosphate synthase (249 aa).

The protein belongs to the TrpC family.

The enzyme catalyses 1-(2-carboxyphenylamino)-1-deoxy-D-ribulose 5-phosphate + H(+) = (1S,2R)-1-C-(indol-3-yl)glycerol 3-phosphate + CO2 + H2O. It participates in amino-acid biosynthesis; L-tryptophan biosynthesis; L-tryptophan from chorismate: step 4/5. This chain is Indole-3-glycerol phosphate synthase, found in Pyrobaculum neutrophilum (strain DSM 2338 / JCM 9278 / NBRC 100436 / V24Sta) (Thermoproteus neutrophilus).